Reading from the N-terminus, the 272-residue chain is 3-methyl-2-oxobutanoate hydroxymethyltransferase (272 aa).

Positions 51 and 90 each coordinate Mg(2+). 3-methyl-2-oxobutanoate-binding positions include 51–52, D90, and K120; that span reads DS. E122 is a binding site for Mg(2+). Residue E189 is the Proton acceptor of the active site.

This sequence belongs to the PanB family. As to quaternary structure, homodecamer; pentamer of dimers. Mg(2+) serves as cofactor.

It is found in the cytoplasm. The enzyme catalyses 3-methyl-2-oxobutanoate + (6R)-5,10-methylene-5,6,7,8-tetrahydrofolate + H2O = 2-dehydropantoate + (6S)-5,6,7,8-tetrahydrofolate. It participates in cofactor biosynthesis; (R)-pantothenate biosynthesis; (R)-pantoate from 3-methyl-2-oxobutanoate: step 1/2. Functionally, catalyzes the reversible reaction in which hydroxymethyl group from 5,10-methylenetetrahydrofolate is transferred onto alpha-ketoisovalerate to form ketopantoate. The sequence is that of 3-methyl-2-oxobutanoate hydroxymethyltransferase from Syntrophus aciditrophicus (strain SB).